Reading from the N-terminus, the 446-residue chain is Probable ribosomal RNA small subunit methyltransferase B (446 aa).

S-adenosyl-L-methionine contacts are provided by residues 260–266 (CAAPGGK), aspartate 284, aspartate 311, and aspartate 330. The active-site Nucleophile is the cysteine 383.

This sequence belongs to the class I-like SAM-binding methyltransferase superfamily. RsmB/NOP family.

The protein localises to the cytoplasm. The catalysed reaction is cytidine(967) in 16S rRNA + S-adenosyl-L-methionine = 5-methylcytidine(967) in 16S rRNA + S-adenosyl-L-homocysteine + H(+). Specifically methylates the cytosine at position 967 (m5C967) of 16S rRNA. In Synechocystis sp. (strain ATCC 27184 / PCC 6803 / Kazusa), this protein is Probable ribosomal RNA small subunit methyltransferase B.